The primary structure comprises 154 residues: MIHVAFVCLGNICRSPMAEAIMRQRLQERGISDIKVHSRGTGRWNLGEPPHNGTQKILQKYHIPYDGMVSELFEPDDDFDYIIAMDQSNVDNIKQINPNLQGQLFKLLEFSNMEESDVPDPYYTNNFEGVFEMVQSSCDNLIDYIVKDANLKER.

Cys-8 functions as the Nucleophile in the catalytic mechanism. Arg-14 is an active-site residue. Residue Asp-120 is the Proton donor of the active site.

This sequence belongs to the low molecular weight phosphotyrosine protein phosphatase family.

It catalyses the reaction O-phospho-L-tyrosyl-[protein] + H2O = L-tyrosyl-[protein] + phosphate. Functionally, dephosphorylates the phosphotyrosine-containing proteins. The protein is Low molecular weight protein-tyrosine-phosphatase PtpA (ptpA) of Staphylococcus epidermidis (strain ATCC 35984 / DSM 28319 / BCRC 17069 / CCUG 31568 / BM 3577 / RP62A).